The sequence spans 94 residues: Co-chaperonin GroES (94 aa).

This sequence belongs to the GroES chaperonin family. In terms of assembly, heptamer of 7 subunits arranged in a ring. Interacts with the chaperonin GroEL.

It is found in the cytoplasm. In terms of biological role, together with the chaperonin GroEL, plays an essential role in assisting protein folding. The GroEL-GroES system forms a nano-cage that allows encapsulation of the non-native substrate proteins and provides a physical environment optimized to promote and accelerate protein folding. GroES binds to the apical surface of the GroEL ring, thereby capping the opening of the GroEL channel. The sequence is that of Co-chaperonin GroES from Staphylococcus aureus (strain Mu50 / ATCC 700699).